Consider the following 89-residue polypeptide: MKPMYRSRSWRRKYVRTPGGRTVIHFERRKPKVAHCAMCGRPLNGVPRGRPSELRKLPKTAKRPERPYPNLCPSCMRKVIKAQVRASLS.

The tract at residues 41–69 (RPLNGVPRGRPSELRKLPKTAKRPERPYP) is disordered. Basic and acidic residues predominate over residues 50 to 66 (RPSELRKLPKTAKRPER).

This sequence belongs to the eukaryotic ribosomal protein eL34 family.

The protein is Large ribosomal subunit protein eL34 of Thermococcus gammatolerans (strain DSM 15229 / JCM 11827 / EJ3).